The sequence spans 122 residues: Putative iron-sulfur cluster insertion protein ErpA (122 aa).

Residues Cys50, Cys114, and Cys116 each contribute to the iron-sulfur cluster site.

Belongs to the HesB/IscA family. Homodimer. Requires iron-sulfur cluster as cofactor.

Functionally, required for insertion of 4Fe-4S clusters. The polypeptide is Putative iron-sulfur cluster insertion protein ErpA (Cupriavidus metallidurans (strain ATCC 43123 / DSM 2839 / NBRC 102507 / CH34) (Ralstonia metallidurans)).